The primary structure comprises 569 residues: Sulfite reductase [NADPH] hemoprotein beta-component (569 aa).

[4Fe-4S] cluster contacts are provided by Cys-433, Cys-439, Cys-478, and Cys-482. Siroheme is bound at residue Cys-482.

This sequence belongs to the nitrite and sulfite reductase 4Fe-4S domain family. In terms of assembly, alpha(8)-beta(8). The alpha component is a flavoprotein, the beta component is a hemoprotein. Siroheme serves as cofactor. [4Fe-4S] cluster is required as a cofactor.

It catalyses the reaction hydrogen sulfide + 3 NADP(+) + 3 H2O = sulfite + 3 NADPH + 4 H(+). It functions in the pathway sulfur metabolism; hydrogen sulfide biosynthesis; hydrogen sulfide from sulfite (NADPH route): step 1/1. Its function is as follows. Component of the sulfite reductase complex that catalyzes the 6-electron reduction of sulfite to sulfide. This is one of several activities required for the biosynthesis of L-cysteine from sulfate. The protein is Sulfite reductase [NADPH] hemoprotein beta-component of Blochmanniella floridana.